The primary structure comprises 264 residues: Cysteine-rich repeat secretory protein 26 (264 aa).

A signal peptide spans 1 to 27; that stretch reads MSSNIFGSVPILVVVAIQLLLVHNVSS. Gnk2-homologous domains follow at residues 34-142 and 148-261; these read YLNH…SVDS and YKRM…LYPF.

The protein belongs to the cysteine-rich repeat secretory protein family.

Its subcellular location is the secreted. This chain is Cysteine-rich repeat secretory protein 26 (CRRSP26), found in Arabidopsis thaliana (Mouse-ear cress).